The primary structure comprises 84 residues: Alpha-mammal toxin Ts2 (84 aa).

A signal peptide spans methionine 1–glycine 20. Residues lysine 21 to glycine 83 enclose the LCN-type CS-alpha/beta domain. Disulfide bonds link cysteine 31/cysteine 82, cysteine 35/cysteine 58, cysteine 43/cysteine 63, and cysteine 47/cysteine 65. Cysteine amide is present on cysteine 82.

The protein belongs to the long (4 C-C) scorpion toxin superfamily. Sodium channel inhibitor family. Beta subfamily. As to expression, expressed by the venom gland.

It localises to the secreted. In terms of biological role, alpha toxins bind voltage-independently at site-3 of sodium channels (Nav) and inhibit the inactivation of the activated channels, thereby blocking neuronal transmission. This toxin acts on Nav1.2/SCN2A, Nav1.3/SCN3A, Nav1.5/SCN5A, Nav1.6/SCN8A and Nav1.7/SCN9A voltage-gated sodium channels, with the highest affinity for Nav1.3/SCN3A, followed by Nav1.6/SCN8A and Nav1.7/SCN9A which are affected almost equally. Interestingly, shows a significant shift of the voltage dependence of activation for Nav1.3/SCN3A that is characteristic of beta-toxins. In addition, in presence of LPS, this toxin inhibits the release of NO, IL-6 and TNF-alpha in J774.1 cells. Further, in the absence of LPS, it stimulates the production of the anti-inflammatory cytokine IL-10. This toxin is active on mammals. This is Alpha-mammal toxin Ts2 from Tityus serrulatus (Brazilian scorpion).